The chain runs to 297 residues: tRNA dimethylallyltransferase (297 aa).

10–17 (GITASGKS) provides a ligand contact to ATP. Substrate is bound at residue 12–17 (TASGKS). An interaction with substrate tRNA region spans residues 36–39 (DSKQ).

The protein belongs to the IPP transferase family. As to quaternary structure, monomer. Requires Mg(2+) as cofactor.

It catalyses the reaction adenosine(37) in tRNA + dimethylallyl diphosphate = N(6)-dimethylallyladenosine(37) in tRNA + diphosphate. Functionally, catalyzes the transfer of a dimethylallyl group onto the adenine at position 37 in tRNAs that read codons beginning with uridine, leading to the formation of N6-(dimethylallyl)adenosine (i(6)A). The chain is tRNA dimethylallyltransferase from Wolbachia sp. subsp. Brugia malayi (strain TRS).